The sequence spans 286 residues: MKKIGVITNREKDKGLKYTNQLVESIEKHGGQAVLPTYDGSFQMDDIDNQVVEICNNCDMVICLGGDGTFLRTARTAYLYGLPMLGINLGSLGFLTDVEKGEIDKAVENILNNRFCLEDRIMLTSKLYKDGKLIARDVAINDIVISRGGIPRILHLSTYIDNNLVEMFPGDGIVVATPTGSTAYSLSAGGPIVEPTSGLILITPICPHILSSRALITSDMRKIKICVSQGFEHKATVTVDGQKNLEITGGDYLEIEKANSTVKIIRVNSKNFFTVLRSKIYERKEE.

Catalysis depends on Asp-67, which acts as the Proton acceptor. Residues 67 to 68, Arg-72, 141 to 142, Arg-152, Asp-171, 182 to 187, and Gln-242 contribute to the NAD(+) site; these read DG, ND, and TAYSLS.

Belongs to the NAD kinase family. A divalent metal cation is required as a cofactor.

It localises to the cytoplasm. It carries out the reaction NAD(+) + ATP = ADP + NADP(+) + H(+). Involved in the regulation of the intracellular balance of NAD and NADP, and is a key enzyme in the biosynthesis of NADP. Catalyzes specifically the phosphorylation on 2'-hydroxyl of the adenosine moiety of NAD to yield NADP. This chain is NAD kinase, found in Ruminiclostridium cellulolyticum (strain ATCC 35319 / DSM 5812 / JCM 6584 / H10) (Clostridium cellulolyticum).